Reading from the N-terminus, the 73-residue chain is RNA-binding protein Hfq (73 aa).

In terms of domain architecture, Sm spans 8 to 68; it reads DQFLNQIRKE…ISTFAPQKNV (61 aa).

This sequence belongs to the Hfq family. In terms of assembly, homohexamer.

Its function is as follows. RNA chaperone that binds small regulatory RNA (sRNAs) and mRNAs to facilitate mRNA translational regulation in response to envelope stress, environmental stress and changes in metabolite concentrations. Also binds with high specificity to tRNAs. In Bacillus licheniformis (strain ATCC 14580 / DSM 13 / JCM 2505 / CCUG 7422 / NBRC 12200 / NCIMB 9375 / NCTC 10341 / NRRL NRS-1264 / Gibson 46), this protein is RNA-binding protein Hfq.